We begin with the raw amino-acid sequence, 485 residues long: Tektin-5 (485 aa).

Coiled coils occupy residues arginine 114–cysteine 185, glutamine 225–histidine 247, glutamine 307–glutamate 385, and threonine 421–valine 444.

This sequence belongs to the tektin family. In terms of assembly, microtubule inner protein component of sperm flagellar doublet microtubules. Interacts with TEKT3. Post-translationally, ubiquitinated, leading to its degradation. Deubiquitinated by USP16, promoting its stability.

It is found in the cytoplasm. The protein localises to the cytoskeleton. It localises to the flagellum axoneme. Sperm-specific microtubule inner protein (MIP) part of the dynein-decorated doublet microtubules (DMTs) in flagellar axoneme. Forms an extensive interaction network in different conformations that reinforces the helix bundle composed by other tektin proteins (TEKT1 to TEKT4) and MIPs to anchor the tektin bundle onto the tubulin wall of A-tubule of the sperm flagellum. In Homo sapiens (Human), this protein is Tektin-5 (TEKT5).